Here is a 316-residue protein sequence, read N- to C-terminus: tRNA(Ile)-lysidine synthase (316 aa).

33-38 (SGGTDS) contacts ATP.

It belongs to the tRNA(Ile)-lysidine synthase family.

The protein resides in the cytoplasm. The catalysed reaction is cytidine(34) in tRNA(Ile2) + L-lysine + ATP = lysidine(34) in tRNA(Ile2) + AMP + diphosphate + H(+). In terms of biological role, ligates lysine onto the cytidine present at position 34 of the AUA codon-specific tRNA(Ile) that contains the anticodon CAU, in an ATP-dependent manner. Cytidine is converted to lysidine, thus changing the amino acid specificity of the tRNA from methionine to isoleucine. The sequence is that of tRNA(Ile)-lysidine synthase from Bdellovibrio bacteriovorus (strain ATCC 15356 / DSM 50701 / NCIMB 9529 / HD100).